We begin with the raw amino-acid sequence, 920 residues long: Dynamin-2B (920 aa).

Methionine 1 carries the post-translational modification N-acetylmethionine. Residues 35–303 (PATSLNVVAL…IRSRMKLRLP (269 aa)) form the Dynamin-type G domain. The segment at 45-52 (GNVGAGKS) is G1 motif. GTP is bound at residue 45-53 (GNVGAGKSA). Positions 71–73 (ATR) are G2 motif. Residues 143 to 146 (DLPG) are G3 motif. Positions 204 to 207 (SKID) are G4 motif. GTP is bound at residue 204–210 (SKIDQAA). The tract at residues 238-241 (ALIG) is G5 motif. 246–249 (IASA) is a binding site for GTP. Basic and acidic residues predominate over residues 507–522 (RREEELKGRSSKKGQD). Disordered regions lie at residues 507–577 (RREE…TAGP) and 632–657 (IEEISDDEGEKSKSSKDKKSNGPDSK). The segment covering 523 to 545 (AEQSLLNRATSPQPDGPSSTGGS) has biased composition (polar residues). Composition is skewed to basic and acidic residues over residues 548-567 (SLRDKLMPQDKDKDKEKETP) and 641-652 (EKSKSSKDKKSN). The PH domain maps to 579-703 (GEITAGYLMK…WINKLQKVIQ (125 aa)). In terms of domain architecture, GED spans 737–830 (LRWMSQEVRG…QLSIHDNRAA (94 aa)). The important for homodimerization stretch occupies residues 747 to 761 (YVEAVLNSLAANVPK). A coiled-coil region spans residues 788 to 812 (NERIESLIQEDQNVKRRRDRYQKQS). A disordered region spans residues 828 to 920 (RAAAASSWSD…PPQSGSSYRY (93 aa)). Residues 833–849 (SSWSDNSGTESSPRTNG) are compositionally biased toward polar residues.

Belongs to the TRAFAC class dynamin-like GTPase superfamily. Dynamin/Fzo/YdjA family. Interacts with DRP1A at the plasma membrane and in forming clathrin-coated vesicles (CCV). Ubiquitous. Preferentially expressed in siliques.

It is found in the cytoplasm. It localises to the cytoskeleton. Its subcellular location is the cytoplasmic vesicle. The protein resides in the clathrin-coated vesicle. The protein localises to the cell membrane. The catalysed reaction is GTP + H2O = GDP + phosphate + H(+). Its function is as follows. Putative microtubule-associated force-producing protein, able to bind and hydrolyze GTP. Collaboratively with DRP1A, participates in clathrin-coated vesicle formation during endocytosis. With DRP1A and PIP5K3, required for the precise coordination of polar ARAC3/ROP6 and ARAC4/ROP2 placement and subsequent root hair positioning during planar polarity formation in root hair-forming cells. This is Dynamin-2B from Arabidopsis thaliana (Mouse-ear cress).